The sequence spans 923 residues: Phosphoenolpyruvate carboxylase (923 aa).

Catalysis depends on residues His-149 and Lys-585.

It belongs to the PEPCase type 1 family. The cofactor is Mg(2+).

The catalysed reaction is oxaloacetate + phosphate = phosphoenolpyruvate + hydrogencarbonate. In terms of biological role, forms oxaloacetate, a four-carbon dicarboxylic acid source for the tricarboxylic acid cycle. The protein is Phosphoenolpyruvate carboxylase of Nocardia farcinica (strain IFM 10152).